Here is a 453-residue protein sequence, read N- to C-terminus: Secreted triacylglycerol lipase LIP2 (453 aa).

The signal sequence occupies residues 1–19 (MKLSLVVLTLISVAAQALA). The N-linked (GlcNAc...) asparagine glycan is linked to Asn98. A disulfide bridge links Cys115 with Cys284. Ser197 serves as the catalytic Nucleophile. A glycan (N-linked (GlcNAc...) asparagine) is linked at Asn230. Catalysis depends on residues Asp344 and His378. An intrachain disulfide couples Cys360 to Cys406.

Belongs to the AB hydrolase superfamily. Lipase family. Class Lip subfamily.

It is found in the secreted. The enzyme catalyses a triacylglycerol + H2O = a diacylglycerol + a fatty acid + H(+). The catalysed reaction is a monoacylglycerol + H2O = glycerol + a fatty acid + H(+). It catalyses the reaction a diacylglycerol + H2O = a monoacylglycerol + a fatty acid + H(+). With respect to regulation, the activity is significantly increased in the presence of Triton X-100 and partially inhibited by PMSF but unaffected by univalent and divalent metal ions. Activity is significantly decreased in acetate buffer compared to that in citrate buffer at the same pH. Major secreted lipase involved in Dandruff and seborrheic dermatitis (D/SD) probably via lipase-mediated breakdown of sebaceous lipids and release of irritating free fatty acids. Has triacylglycerol lipase activity and is able to hydrolyze triolein, tristearin, trilinolein, tripalmitoylglycerol and trihexadecenoin. Hydrolyze diacylglycerols such as distearin, dilinolein, dipalmitoylglycerol and dipalmitolein. Shows high esterase activity against 4-nitrophenyl palmitate and 1-naphthyl palmitate but not 1-naphthyl acetate, suggesting that it specifically recognizes fatty acids. Mostly converts monoolein to di- and triolein, while free fatty acids are only produced in low amounts. The polypeptide is Secreted triacylglycerol lipase LIP2 (Malassezia globosa (strain ATCC MYA-4612 / CBS 7966) (Dandruff-associated fungus)).